Consider the following 542-residue polypeptide: Prolyl 3-hydroxylase OGFOD1 (542 aa).

The Fe2OG dioxygenase domain occupies 134–239 (DLESTIDMSC…RLSISGWFHG (106 aa)). Fe cation is bound by residues histidine 155 and aspartate 157. Tyrosine 169 contributes to the 2-oxoglutarate binding site. Position 218 (histidine 218) interacts with Fe cation. 2-oxoglutarate is bound at residue arginine 230. Residues 371–435 (SEDEPEDKKE…AKKESSVPTC (65 aa)) form a disordered region. The span at 395 to 417 (SHSSSEPENSWAATSDSSLQSEG) shows a compositional bias: polar residues.

This sequence belongs to the TPA1 family. Monomer. The cofactor is Fe(2+). L-ascorbate is required as a cofactor.

It localises to the cytoplasm. It is found in the nucleus. The catalysed reaction is [ribosomal protein uS12]-L-proline + 2-oxoglutarate + O2 = [ribosomal protein uS12]-(3S)-3-hydroxy-L-proline + succinate + CO2. In terms of biological role, prolyl 3-hydroxylase that catalyzes 3-hydroxylation of 'Pro-62' of small ribosomal subunit uS12 (RPS23), thereby regulating protein translation termination efficiency. Involved in stress granule formation. The protein is Prolyl 3-hydroxylase OGFOD1 (OGFOD1) of Bos taurus (Bovine).